Consider the following 83-residue polypeptide: Small ribosomal subunit protein bS16 (83 aa).

Belongs to the bacterial ribosomal protein bS16 family.

The chain is Small ribosomal subunit protein bS16 from Polaromonas sp. (strain JS666 / ATCC BAA-500).